Here is a 230-residue protein sequence, read N- to C-terminus: uncharacterized protein (230 aa).

3 residues coordinate a divalent metal cation: E74, E76, and D105.

Belongs to the FAH family.

This is an uncharacterized protein from Pyrococcus horikoshii (strain ATCC 700860 / DSM 12428 / JCM 9974 / NBRC 100139 / OT-3).